A 136-amino-acid polypeptide reads, in one-letter code: Orexigenic neuropeptide QRFP (136 aa).

An N-terminal signal peptide occupies residues M1 to C18. The propeptide occupies F19 to R90. At Q91 the chain carries Pyrrolidone carboxylic acid. F133 carries the phenylalanine amide modification.

It belongs to the RFamide neuropeptide family. In terms of assembly, ligand for the G-protein coupled receptor QRFPR/GPR103. As to expression, expressed widely in the brain with highest expression levels in the cerebellum, medulla, pituitary, retina, vestibular nucleus, and white matter. Also expressed in the bladder, colon, coronary artery, parathyroid gland, prostate, testis, and thyroid.

It is found in the secreted. Stimulates feeding behavior, metabolic rate and locomotor activity and increases blood pressure. May have orexigenic activity. May promote aldosterone secretion by the adrenal gland. This Homo sapiens (Human) protein is Orexigenic neuropeptide QRFP.